The chain runs to 271 residues: Ribosomal RNA small subunit methyltransferase A (271 aa).

The S-adenosyl-L-methionine site is built by H11, L13, G38, E58, D86, and N101.

This sequence belongs to the class I-like SAM-binding methyltransferase superfamily. rRNA adenine N(6)-methyltransferase family. RsmA subfamily.

Its subcellular location is the cytoplasm. It catalyses the reaction adenosine(1518)/adenosine(1519) in 16S rRNA + 4 S-adenosyl-L-methionine = N(6)-dimethyladenosine(1518)/N(6)-dimethyladenosine(1519) in 16S rRNA + 4 S-adenosyl-L-homocysteine + 4 H(+). Functionally, specifically dimethylates two adjacent adenosines (A1518 and A1519) in the loop of a conserved hairpin near the 3'-end of 16S rRNA in the 30S particle. May play a critical role in biogenesis of 30S subunits. This chain is Ribosomal RNA small subunit methyltransferase A, found in Helicobacter pylori (strain G27).